Reading from the N-terminus, the 521-residue chain is uncharacterized protein (521 aa).

The disordered stretch occupies residues M1 to K25. The next 6 helical transmembrane spans lie at G68–L88, V114–V134, V160–G180, V192–L212, A290–W310, and L399–I419.

It is found in the cell membrane. This is an uncharacterized protein from Mycobacterium tuberculosis (strain CDC 1551 / Oshkosh).